Reading from the N-terminus, the 895-residue chain is Probable methyltransferase PMT27 (895 aa).

Topologically, residues 1–16 are cytoplasmic; that stretch reads MAFGRGRGNKRTSTSS. Residues 17–37 form a helical; Signal-anchor for type II membrane protein membrane-spanning segment; that stretch reads YASTITMVIFVALCVFGVWML. Topologically, residues 38 to 895 are lumenal; sequence SSNSVIPPQI…KGFWRPETSQ (858 aa). Over residues 43–52 the composition is skewed to polar residues; that stretch reads IPPQITQGST. A disordered region spans residues 43–362; sequence IPPQITQGST…QRQTSESNTV (320 aa). Residues 90–114 show a composition bias toward basic and acidic residues; the sequence is NPGKLPDDAVKSEDEQRKSAKEKSE. The span at 115 to 127 shows a compositional bias: low complexity; sequence TTSSKTQTQETQQ. Positions 129 to 143 are enriched in basic and acidic residues; it reads NDDKISEEKEKDNGK. Asparagine 145 carries N-linked (GlcNAc...) asparagine glycosylation. Residues 154–174 are compositionally biased toward basic and acidic residues; the sequence is GQMKKVVKEFEKEQKQQRDED. Positions 176 to 191 are enriched in low complexity; it reads GTQPKGTQGQEQGQGK. 2 stretches are compositionally biased toward polar residues: residues 199-232 and 243-256; these read GNKQ…GETS and PEEQ…TGQQ. Basic and acidic residues predominate over residues 257 to 320; that stretch reads NEEKTTASEE…RKDEKKHEQG (64 aa). Residues 337–346 are compositionally biased toward polar residues; sequence SQKSWKSQAT. Residues asparagine 375 and asparagine 709 are each glycosylated (N-linked (GlcNAc...) asparagine).

The protein belongs to the methyltransferase superfamily.

The protein resides in the endoplasmic reticulum membrane. The chain is Probable methyltransferase PMT27 from Arabidopsis thaliana (Mouse-ear cress).